Consider the following 274-residue polypeptide: Bis(5'-nucleosyl)-tetraphosphatase, symmetrical (274 aa).

The protein belongs to the Ap4A hydrolase family.

The catalysed reaction is P(1),P(4)-bis(5'-adenosyl) tetraphosphate + H2O = 2 ADP + 2 H(+). Functionally, hydrolyzes diadenosine 5',5'''-P1,P4-tetraphosphate to yield ADP. In Shewanella baltica (strain OS195), this protein is Bis(5'-nucleosyl)-tetraphosphatase, symmetrical.